The primary structure comprises 311 residues: Mediator of RNA polymerase II transcription subunit 27 (311 aa).

Serine 132 carries the post-translational modification Phosphoserine. Lysine 134 is subject to N6-methyllysine.

It belongs to the Mediator complex subunit 27 family. As to quaternary structure, component of the Mediator complex, which is composed of MED1, MED4, MED6, MED7, MED8, MED9, MED10, MED11, MED12, MED13, MED13L, MED14, MED15, MED16, MED17, MED18, MED19, MED20, MED21, MED22, MED23, MED24, MED25, MED26, MED27, MED29, MED30, MED31, CCNC, CDK8 and CDC2L6/CDK11. The MED12, MED13, CCNC and CDK8 subunits form a distinct module termed the CDK8 module. Mediator containing the CDK8 module is less active than Mediator lacking this module in supporting transcriptional activation. Individual preparations of the Mediator complex lacking one or more distinct subunits have been variously termed ARC, CRSP, DRIP, PC2, SMCC and TRAP.

It is found in the nucleus. Component of the Mediator complex, a coactivator involved in the regulated transcription of nearly all RNA polymerase II-dependent genes. Mediator functions as a bridge to convey information from gene-specific regulatory proteins to the basal RNA polymerase II transcription machinery. Mediator is recruited to promoters by direct interactions with regulatory proteins and serves as a scaffold for the assembly of a functional preinitiation complex with RNA polymerase II and the general transcription factors. This Homo sapiens (Human) protein is Mediator of RNA polymerase II transcription subunit 27 (MED27).